The following is a 202-amino-acid chain: Adenylyl-sulfate kinase (202 aa).

Residue 35–42 coordinates ATP; that stretch reads GLSGSGKS. The active-site Phosphoserine intermediate is the Ser109.

The protein belongs to the APS kinase family.

The enzyme catalyses adenosine 5'-phosphosulfate + ATP = 3'-phosphoadenylyl sulfate + ADP + H(+). The protein operates within sulfur metabolism; hydrogen sulfide biosynthesis; sulfite from sulfate: step 2/3. Functionally, catalyzes the synthesis of activated sulfate. This chain is Adenylyl-sulfate kinase, found in Bacteroides fragilis (strain YCH46).